The chain runs to 488 residues: Histamine H1 receptor (488 aa).

Residues Met-1 to Pro-38 are Extracellular-facing. Asn-14 and Asn-27 each carry an N-linked (GlcNAc...) asparagine glycan. A helical transmembrane segment spans residues Leu-39 to Tyr-59. Residues Ala-60–Leu-73 are Cytoplasmic-facing. The helical transmembrane segment at Tyr-74–His-98 threads the bilayer. Topologically, residues Arg-99–Arg-106 are extracellular. Residues Pro-107–Ile-132 form a helical membrane-spanning segment. The cysteines at positions 109 and 189 are disulfide-linked. 2 residues coordinate histamine: Asp-116 and Thr-121. Residues Asp-116–Thr-121 are important for agonist binding. Topologically, residues Asp-133–Ala-153 are cytoplasmic. A phosphothreonine mark is found at Thr-149 and Thr-151. Residues Ser-154 to Gly-173 form a helical membrane-spanning segment. Over Trp-174–Thr-197 the chain is Extracellular. The chain crosses the membrane as a helical span at residues Trp-198–Ile-220. Residue Asn-207 coordinates histamine. Residues Arg-221–Gln-417 are Cytoplasmic-facing. Phosphoserine is present on Ser-239. Positions Arg-259 to Lys-274 are enriched in basic and acidic residues. Positions Arg-259–Ser-285 are disordered. Phosphoserine is present on residues Ser-345, Ser-381, Ser-383, Ser-397, and Ser-399. Residues Leu-418 to Phe-441 traverse the membrane as a helical segment. The segment at Phe-425–Trp-429 is important for agonist binding. A histamine-binding site is contributed by Tyr-432. Cys-442 and Cys-445 are joined by a disulfide. Residues Cys-442 to Asn-447 are Extracellular-facing. The chain crosses the membrane as a helical span at residues Glu-448–Pro-470. The Cytoplasmic segment spans residues Leu-471 to Pro-488.

This sequence belongs to the G-protein coupled receptor 1 family. Phosphorylation at sites in the second and third cytoplasmic loops independently contribute to agonist-induced receptor down-regulation.

The protein resides in the cell membrane. G-protein-coupled receptor for histamine, a biogenic amine that functions as an immune modulator and a neurotransmitter. Through the H1 receptor, histamine mediates the contraction of smooth muscles and increases capillary permeability due to contraction of terminal venules. Also mediates neurotransmission in the central nervous system and thereby regulates circadian rhythms, emotional and locomotor activities as well as cognitive functions. The protein is Histamine H1 receptor of Cavia porcellus (Guinea pig).